We begin with the raw amino-acid sequence, 363 residues long: tRNA/tmRNA (uracil-C(5))-methyltransferase (363 aa).

S-adenosyl-L-methionine-binding residues include Q187, Y215, N220, E236, and D296. The Nucleophile role is filled by C321. E355 functions as the Proton acceptor in the catalytic mechanism.

The protein belongs to the class I-like SAM-binding methyltransferase superfamily. RNA M5U methyltransferase family. TrmA subfamily.

It carries out the reaction uridine(54) in tRNA + S-adenosyl-L-methionine = 5-methyluridine(54) in tRNA + S-adenosyl-L-homocysteine + H(+). The enzyme catalyses uridine(341) in tmRNA + S-adenosyl-L-methionine = 5-methyluridine(341) in tmRNA + S-adenosyl-L-homocysteine + H(+). In terms of biological role, dual-specificity methyltransferase that catalyzes the formation of 5-methyluridine at position 54 (m5U54) in all tRNAs, and that of position 341 (m5U341) in tmRNA (transfer-mRNA). The sequence is that of tRNA/tmRNA (uracil-C(5))-methyltransferase from Pseudomonas aeruginosa (strain LESB58).